A 449-amino-acid chain; its full sequence is 8-oxoguanine deaminase (449 aa).

Zn(2+)-binding residues include His-64 and His-66. Gln-69 provides a ligand contact to substrate. A Zn(2+)-binding site is contributed by His-232. Residues Glu-235 and His-269 each contribute to the substrate site. Residues His-269 and Asp-320 each contribute to the Zn(2+) site.

The protein belongs to the metallo-dependent hydrolases superfamily. ATZ/TRZ family. In terms of assembly, homodimer. Zn(2+) serves as cofactor.

It catalyses the reaction 8-oxoguanine + H2O + H(+) = urate + NH4(+). The protein operates within purine metabolism. Specifically deaminates 8-Oxoguanine (8-oxoG) to uric acid. 8-oxoG is formed via the oxidation of guanine within DNA by reactive oxygen species and leads, if uncorrected, to the incorporation of 8-oxoG:A mismatches and eventually to G:C to T:A transversions. The sequence is that of 8-oxoguanine deaminase from Pseudomonas aeruginosa (strain ATCC 15692 / DSM 22644 / CIP 104116 / JCM 14847 / LMG 12228 / 1C / PRS 101 / PAO1).